The chain runs to 943 residues: MSQDYKTTLHLPATDFPMRGDLPKREPAILERWERDDFYAQLRAHAKGRPLFLLHDGPPYANGQIHLGHAVNKILKDIIIKSKHLDGFDAPYIPGWDCHGLPIEIAIEKKYGKVGVTLDAVQFRQKCREYAAEQIQLQRRDFKRLGIIGDWDAPYKTLDFRFEADEIRALAKIVDKGHLIRGTKPVHWCFDCGSALAEAEIEYTDKISPMVDVAYPALDPSALAAVFNATLPPDVQLAVPIWTTTPWTLPASLAICVGPTLDYVLVEGPTHSGQRRWLILAEALAAKALARYGIAELLIHGSAKGAAMEQHIFAHPFYPDRTIPLLLGNHVSAEDGTGAVHTAPGHGQEDHQVFQQYGLLNRYSAAELNPVDARGVYLSTTPPLGELTLAGLHIWKANPLIVDALRLRGVLLAAAEMHHSYPHCWRHKTPIVFRATPQWFISMEQAALRSAALKAITHVTWYPQWGQARILSMIENRPDWTISRQRTWGVPIPLFVHRHSGAPHPHSAALMRQIADRVQQQGVDIWYSLDQTELLGTEADQYEKITDILDVWFDSGITHEAVLLERGLPKPADLYLEGADQHRGWFQSSLLTGVAMDNAAPYKQCLTHGFTVDQHGRKMSKSLGNGIEPQDIIKTLGADILRLWIASTDYSNEMSLSQEILKRTTDAYRRIRNTARFLLGNLHGFDPTLHLVPLSDMIALDRWIVHRAFELQQTIKAAYTRYDFAEIVQTILNFCSVDLGSLYLDVTKDRLYTMREDAPGRRSAQTAMYHLTAAFVRWIAPILSFTADELWSYLPGDHADNVLFTTWYDGLAPLPPNAPLTAADFDKLLTLRDHVTKVLEPMRANGVIGAALEAEITVAAAADTAARWQPLTEELRFLFITGDVTVTPANTDGFFVSAQATTKAKCARCWHYRADIGAHPTHPELCGRCITNVDGPGEQRHWF.

Positions 59-69 (PYANGQIHLGH) match the 'HIGH' region motif. L-isoleucyl-5'-AMP is bound at residue E577. The 'KMSKS' region signature appears at 618 to 622 (KMSKS). Position 621 (K621) interacts with ATP. The Zn(2+) site is built by C906, C909, C926, and C929.

It belongs to the class-I aminoacyl-tRNA synthetase family. IleS type 1 subfamily. Monomer. It depends on Zn(2+) as a cofactor.

The protein localises to the cytoplasm. The enzyme catalyses tRNA(Ile) + L-isoleucine + ATP = L-isoleucyl-tRNA(Ile) + AMP + diphosphate. In terms of biological role, catalyzes the attachment of isoleucine to tRNA(Ile). As IleRS can inadvertently accommodate and process structurally similar amino acids such as valine, to avoid such errors it has two additional distinct tRNA(Ile)-dependent editing activities. One activity is designated as 'pretransfer' editing and involves the hydrolysis of activated Val-AMP. The other activity is designated 'posttransfer' editing and involves deacylation of mischarged Val-tRNA(Ile). The chain is Isoleucine--tRNA ligase from Xylella fastidiosa (strain M23).